Consider the following 453-residue polypeptide: tRNA modification GTPase MnmE (453 aa).

(6S)-5-formyl-5,6,7,8-tetrahydrofolate contacts are provided by Arg-22, Glu-79, and Lys-119. In terms of domain architecture, TrmE-type G spans 215-376; it reads GMKVVIAGRP…LKQHLKSLMG (162 aa). K(+) is bound at residue Asn-225. Residues 225–230, 244–250, 269–272, and 334–337 each bind GTP; these read NAGKSS, TEIAGTT, DTAG, and NKAD. Residue Ser-229 participates in Mg(2+) binding. The K(+) site is built by Thr-244, Ile-246, and Thr-249. Thr-250 contacts Mg(2+). Lys-453 contacts (6S)-5-formyl-5,6,7,8-tetrahydrofolate.

It belongs to the TRAFAC class TrmE-Era-EngA-EngB-Septin-like GTPase superfamily. TrmE GTPase family. In terms of assembly, homodimer. Heterotetramer of two MnmE and two MnmG subunits. K(+) is required as a cofactor.

It localises to the cytoplasm. Functionally, exhibits a very high intrinsic GTPase hydrolysis rate. Involved in the addition of a carboxymethylaminomethyl (cmnm) group at the wobble position (U34) of certain tRNAs, forming tRNA-cmnm(5)s(2)U34. The polypeptide is tRNA modification GTPase MnmE (Shewanella oneidensis (strain ATCC 700550 / JCM 31522 / CIP 106686 / LMG 19005 / NCIMB 14063 / MR-1)).